We begin with the raw amino-acid sequence, 420 residues long: UDP-N-acetylglucosamine 1-carboxyvinyltransferase (420 aa).

22–23 (KN) provides a ligand contact to phosphoenolpyruvate. A UDP-N-acetyl-alpha-D-glucosamine-binding site is contributed by Arg-93. Cys-117 acts as the Proton donor in catalysis. Position 117 is a 2-(S-cysteinyl)pyruvic acid O-phosphothioketal (Cys-117). UDP-N-acetyl-alpha-D-glucosamine contacts are provided by Asp-307 and Ile-329.

It belongs to the EPSP synthase family. MurA subfamily.

The protein localises to the cytoplasm. It carries out the reaction phosphoenolpyruvate + UDP-N-acetyl-alpha-D-glucosamine = UDP-N-acetyl-3-O-(1-carboxyvinyl)-alpha-D-glucosamine + phosphate. It functions in the pathway cell wall biogenesis; peptidoglycan biosynthesis. Functionally, cell wall formation. Adds enolpyruvyl to UDP-N-acetylglucosamine. This Alteromonas mediterranea (strain DSM 17117 / CIP 110805 / LMG 28347 / Deep ecotype) protein is UDP-N-acetylglucosamine 1-carboxyvinyltransferase.